Consider the following 65-residue polypeptide: Ferredoxin soy (65 aa).

A 4Fe-4S ferredoxin-type domain is found at 2 to 29 (GVQVDKERCVGAGMCALTAPDVFTQDDD). The [3Fe-4S] cluster site is built by C10, C16, and C55.

It depends on [3Fe-4S] cluster as a cofactor.

Electron transport protein for the cytochrome P-450-SOY system. This Streptomyces griseus protein is Ferredoxin soy (soyB).